The primary structure comprises 202 residues: uncharacterized protein (202 aa).

An N-terminal signal peptide occupies residues 1–18 (MKNRLLILSLLVSVPAFA).

The protein to E.coli YebB.

This is an uncharacterized protein from Escherichia coli (strain K12).